Consider the following 421-residue polypeptide: MRVIFVISLVSFMFVTWQTNPVHCRQHKTPQVVDLGYSGAKVETVMKTSDVVYAKPMCHGGRCPPPPPTKTCSKPSSLKAVSRAGHAGYFGTIGSGKYKNNENCWWSIQAPADQRLRLHFESLYLEYGNRYCPYDYVNIHNGKNENGQRLGKYCGIKAPDDIITTGNSAYVRFSTDSSVTKYGFRLRYSIVSCNSLHTIFGSHGEFGTVGPAYGNFEECSWKIEVPNGKRVRLHFKRFHLENNNKYCPYDKLKIYDGSSASASLKGTLCGKRRPKDIESTGKTMFVTFSSDISLTFPGFRIQYSVPASCSVVNELTGPSGTFGTTGSQYENNEVCSWKIEVAQNKRVLLHIYRFNIEVEANCEYDSLTVYKGPNDSAPMLGKYCGETIPTFMVSSGNTMFIKFQTDGSARKPGFWIGYTTG.

Positions 1 to 24 (MRVIFVISLVSFMFVTWQTNPVHC) are cleaved as a signal peptide. Intrachain disulfides connect Cys72–Cys104, Cys132–Cys154, Cys193–Cys219, Cys247–Cys269, Cys309–Cys335, and Cys362–Cys384. CUB domains lie at 72-191 (CSKP…YSIV), 193-306 (CNSL…YSVP), and 309-421 (CSVV…YTTG).

As to expression, detected in vestimentum and trunk but not in opisthosome or obturaculum. In the vestimentum, expression is restricted to epithelial cells under apical cuticular plaques.

Functionally, may play a role in protein-protein interactions during tube assembly. The polypeptide is Exoskeleton protein RP43 (Riftia pachyptila (Vent tube worm)).